Consider the following 191-residue polypeptide: Surfactant protein C (191 aa).

Positions 1–23 (MDVGSKEVLMESPPDYSAAPRGR) are excised as a propeptide. Residues Cys-28 and Cys-29 are each lipidated (S-palmitoyl cysteine). Positions 59–191 (HMSQKHTEMV…LCGEVPLYYI (133 aa)) are excised as a propeptide. The BRICHOS domain maps to 94-191 (FSFGSTGLVV…LCGEVPLYYI (98 aa)). A disulfide bond links Cys-121 and Cys-183.

It is found in the secreted. It localises to the extracellular space. Its subcellular location is the surface film. In terms of biological role, pulmonary surfactant associated proteins promote alveolar stability by lowering the surface tension at the air-liquid interface in the peripheral air spaces. The sequence is that of Surfactant protein C (SFTPC) from Macaca mulatta (Rhesus macaque).